The following is a 706-amino-acid chain: Coiled-coil domain-containing protein 177 (706 aa).

Over residues methionine 1–glutamate 11 the composition is skewed to acidic residues. 3 disordered regions span residues methionine 1–arginine 63, alanine 179–leucine 262, and alanine 268–glycine 287. Low complexity-rich tracts occupy residues proline 28–proline 49 and alanine 179–serine 209. A compositionally biased stretch (pro residues) spans proline 210 to alanine 221. Residues alanine 242–glutamate 257 show a composition bias toward low complexity. Serine 310 is subject to Phosphoserine. The stretch at alanine 360–glutamine 624 forms a coiled coil. 4 disordered regions span residues glutamine 364–alanine 386, valine 398–glutamate 425, aspartate 448–histidine 580, and glutamate 651–lysine 706. The span at glutamine 368–alanine 386 shows a compositional bias: basic and acidic residues. Basic and acidic residues-rich tracts occupy residues aspartate 448–leucine 529, glutamine 548–histidine 580, and glutamate 651–alanine 663. Residues leucine 664 to serine 674 show a composition bias toward low complexity. Basic and acidic residues predominate over residues histidine 676–lysine 706.

This chain is Coiled-coil domain-containing protein 177 (Ccdc177), found in Mus musculus (Mouse).